A 239-amino-acid polypeptide reads, in one-letter code: Transmembrane ascorbate ferrireductase 1 (239 aa).

Topologically, residues 1–7 are cytoplasmic; that stretch reads MAVRINA. Residues 8-28 form a helical membrane-spanning segment; that stretch reads MAVTFVAHALAVIAAIMVLVW. In terms of domain architecture, Cytochrome b561 spans 13-216; sequence VAHALAVIAA…FGAFVVLTAS (204 aa). At 29–45 the chain is on the lumenal side; the sequence is SISYRGGLAWEATNKNL. The helical transmembrane segment at 46–66 threads the bilayer; sequence IFNLHPVLMLIGFIILGGEAI. A heme b-binding site is contributed by His-50. The Cytoplasmic segment spans residues 67–81; it reads ISYKSLPLEKPVKKL. A helical transmembrane segment spans residues 82 to 102; it reads IHLILHAIALALGIFGICAAF. His-83 and His-117 together coordinate heme b. At 103–119 the chain is on the lumenal side; that stretch reads KNHNESHIPNLYSLHSW. The chain crosses the membrane as a helical span at residues 120 to 140; the sequence is IGIGVISLYGFQWVYSFIVFF. At 141–155 the chain is on the cytoplasmic side; it reads FPGGSTNLKSGLLPW. His-156 provides a ligand contact to heme b. Residues 156–176 form a helical membrane-spanning segment; the sequence is HAMLGLFVYILAVGNAALGFL. The Lumenal segment spans residues 177-193; sequence EKLTFLENGGLDKYGSE. The helical transmembrane segment at 194 to 214 threads the bilayer; the sequence is AFLINFTAIITILFGAFVVLT. Residues 215-239 lie on the Cytoplasmic side of the membrane; the sequence is ASAESPSPSPSVSNDDSVDFSYSAI. Residues 217 to 239 are disordered; sequence AESPSPSPSVSNDDSVDFSYSAI. The segment covering 224-239 has biased composition (low complexity); the sequence is PSVSNDDSVDFSYSAI.

Homodimer. The cofactor is heme b. Expressed in roots, seedlings and leaves. Lower expression in flowers. Expressed in the L1 layer of the shoot apex, in the epidermis of leaf primordia and young leaves and in vascular bundles. In the differentiation zone of the root, detected in the pericycle and in the epidermis, but not in the cortex. Strongly expressed in the lateral part of the root cap and in the epidermis of the root tip, but not in the meristematic tissue. Not expressed in lateral roots. In mature embryos, expressed in the epidermis, cotyledon tips and root tips.

Its subcellular location is the vacuole membrane. It carries out the reaction Fe(3+)(out) + L-ascorbate(in) = monodehydro-L-ascorbate radical(in) + Fe(2+)(out) + H(+). Two-heme-containing cytochrome. Catalyzes ascorbate-dependent trans-membrane ferric-chelate reduction. Able to use dihydrolipoic acid (DHLA) as an alternative substrate to ascorbate. This chain is Transmembrane ascorbate ferrireductase 1 (CYB561A), found in Arabidopsis thaliana (Mouse-ear cress).